Consider the following 303-residue polypeptide: MTSRTEAVKAYLLDLQDRICSALETEDGGARFVEDAWVRDAGGGGRTRVIGEGKVIEKGGVNFSHVFGAGLPPSASAHRPELAGRGFEALGVSLVIHPHNPHVPTSHANVRFFIAEKEGEEAVWWFGGGFDLTPYYGNEEDCVHWHRVAEQACAPFGADVYPRYKAWCDRYFHLKHRGEPRGIGGLFFDDLNEWDFDTCFAFMRAIGDAYVDAYLPIIQRRKDTPYTAKQREFQEYRRGRYVEFNLVYDRGTLFGLQSGGRTESILMSLPPQVRWGYDWKAEPGSEEARLTDYFLQDRDWLAQ.

A substrate-binding site is contributed by serine 93. Residues histidine 97 and histidine 107 each contribute to the a divalent metal cation site. Histidine 107 acts as the Proton donor in catalysis. 109-111 (NVR) serves as a coordination point for substrate. The a divalent metal cation site is built by histidine 146 and histidine 176. The important for dimerization stretch occupies residues 241 to 276 (YVEFNLVYDRGTLFGLQSGGRTESILMSLPPQVRWG). 259–261 (GGR) is a substrate binding site.

Belongs to the aerobic coproporphyrinogen-III oxidase family. As to quaternary structure, homodimer. A divalent metal cation is required as a cofactor.

The protein resides in the cytoplasm. The enzyme catalyses coproporphyrinogen III + O2 + 2 H(+) = protoporphyrinogen IX + 2 CO2 + 2 H2O. Its pathway is porphyrin-containing compound metabolism; protoporphyrin-IX biosynthesis; protoporphyrinogen-IX from coproporphyrinogen-III (O2 route): step 1/1. Its function is as follows. Involved in the heme biosynthesis. Catalyzes the aerobic oxidative decarboxylation of propionate groups of rings A and B of coproporphyrinogen-III to yield the vinyl groups in protoporphyrinogen-IX. This Pseudomonas entomophila (strain L48) protein is Oxygen-dependent coproporphyrinogen-III oxidase.